Here is a 436-residue protein sequence, read N- to C-terminus: GTPase Der (436 aa).

EngA-type G domains are found at residues 3 to 167 (NIVA…PIKP) and 177 to 352 (PRFA…ENRQ). GTP is bound by residues 9 to 16 (GRPNVGKS), 56 to 60 (DTGGY), 119 to 122 (NKVD), 183 to 190 (GRPNAGKS), 230 to 234 (DTAGI), and 295 to 298 (NKWD). The region spanning 353–436 (QRISTSKFNE…VPIDIYIREK (84 aa)) is the KH-like domain.

It belongs to the TRAFAC class TrmE-Era-EngA-EngB-Septin-like GTPase superfamily. EngA (Der) GTPase family. As to quaternary structure, associates with the 50S ribosomal subunit.

Functionally, GTPase that plays an essential role in the late steps of ribosome biogenesis. The sequence is that of GTPase Der from Flavobacterium psychrophilum (strain ATCC 49511 / DSM 21280 / CIP 103535 / JIP02/86).